The sequence spans 512 residues: Cytochrome P450 1A1 (512 aa).

The mitochondrial targeting signal stretch occupies residues 29–40 (SRPQVPKGLKNP). O-linked (GlcNAc) serine glycosylation occurs at serine 67. Residue phenylalanine 224 participates in substrate binding. A heme-binding site is contributed by cysteine 457.

It belongs to the cytochrome P450 family. Interacts with cytosolic chaperones HSP70 and HSP90; this interaction is required for initial targeting to mitochondria. Interacts (via mitochondrial targeting signal) with TOMM40 (via N-terminus); this interaction is required for translocation across the mitochondrial outer membrane. Heme is required as a cofactor. As to expression, lung, lymphocytes and placenta.

Its subcellular location is the endoplasmic reticulum membrane. It is found in the mitochondrion inner membrane. The protein localises to the microsome membrane. The protein resides in the cytoplasm. It carries out the reaction an organic molecule + reduced [NADPH--hemoprotein reductase] + O2 = an alcohol + oxidized [NADPH--hemoprotein reductase] + H2O + H(+). It catalyses the reaction estrone + reduced [NADPH--hemoprotein reductase] + O2 = 2-hydroxyestrone + oxidized [NADPH--hemoprotein reductase] + H2O + H(+). The enzyme catalyses estrone + reduced [NADPH--hemoprotein reductase] + O2 = 4-hydroxyestrone + oxidized [NADPH--hemoprotein reductase] + H2O + H(+). The catalysed reaction is estrone + reduced [NADPH--hemoprotein reductase] + O2 = 6alpha-hydroxyestrone + oxidized [NADPH--hemoprotein reductase] + H2O + H(+). It carries out the reaction estrone + reduced [NADPH--hemoprotein reductase] + O2 = 15alpha-hydroxyestrone + oxidized [NADPH--hemoprotein reductase] + H2O + H(+). It catalyses the reaction estrone + reduced [NADPH--hemoprotein reductase] + O2 = 16alpha-hydroxyestrone + oxidized [NADPH--hemoprotein reductase] + H2O + H(+). The enzyme catalyses 17beta-estradiol + reduced [NADPH--hemoprotein reductase] + O2 = 2-hydroxy-17beta-estradiol + oxidized [NADPH--hemoprotein reductase] + H2O + H(+). The catalysed reaction is 17beta-estradiol + reduced [NADPH--hemoprotein reductase] + O2 = 4-hydroxy-17beta-estradiol + oxidized [NADPH--hemoprotein reductase] + H2O + H(+). It carries out the reaction 17beta-estradiol + reduced [NADPH--hemoprotein reductase] + O2 = 6alpha-hydroxy-17beta-estradiol + oxidized [NADPH--hemoprotein reductase] + H2O + H(+). It catalyses the reaction 17beta-estradiol + reduced [NADPH--hemoprotein reductase] + O2 = 7alpha-hydroxy-17beta-estradiol + oxidized [NADPH--hemoprotein reductase] + H2O + H(+). The enzyme catalyses 17beta-estradiol + reduced [NADPH--hemoprotein reductase] + O2 = 15alpha-hydroxy-17beta-estradiol + oxidized [NADPH--hemoprotein reductase] + H2O + H(+). The catalysed reaction is (5Z,8Z,11Z)-eicosatrienoate + reduced [NADPH--hemoprotein reductase] + O2 = 19-hydroxy-(5Z,8Z,11Z)-eicosatrienoate + oxidized [NADPH--hemoprotein reductase] + H2O + H(+). It carries out the reaction (5Z,8Z,11Z,14Z)-eicosatetraenoate + reduced [NADPH--hemoprotein reductase] + O2 = 16-hydroxy-(5Z,8Z,11Z,14Z)-eicosatetraenoate + oxidized [NADPH--hemoprotein reductase] + H2O + H(+). It catalyses the reaction (5Z,8Z,11Z,14Z)-eicosatetraenoate + reduced [NADPH--hemoprotein reductase] + O2 = 17-hydroxy-(5Z,8Z,11Z,14Z)-eicosatetraenoate + oxidized [NADPH--hemoprotein reductase] + H2O + H(+). The enzyme catalyses (5Z,8Z,11Z,14Z)-eicosatetraenoate + reduced [NADPH--hemoprotein reductase] + O2 = 18-hydroxy-(5Z,8Z,11Z,14Z)-eicosatetraenoate + oxidized [NADPH--hemoprotein reductase] + H2O + H(+). The catalysed reaction is (5Z,8Z,11Z,14Z)-eicosatetraenoate + reduced [NADPH--hemoprotein reductase] + O2 = 19-hydroxy-(5Z,8Z,11Z,14Z)-eicosatetraenoate + oxidized [NADPH--hemoprotein reductase] + H2O + H(+). It carries out the reaction (5Z,8Z,11Z,14Z,17Z)-eicosapentaenoate + reduced [NADPH--hemoprotein reductase] + O2 = 19-hydroxy-(5Z,8Z,11Z,14Z,17Z)-eicosapentaenoate + oxidized [NADPH--hemoprotein reductase] + H2O + H(+). It catalyses the reaction (5Z,8Z,11Z,14Z)-eicosatetraenoate + reduced [NADPH--hemoprotein reductase] + O2 = (8R,9S)-epoxy-(5Z,11Z,14Z)-eicosatrienoate + oxidized [NADPH--hemoprotein reductase] + H2O + H(+). The enzyme catalyses (5Z,8Z,11Z,14Z)-eicosatetraenoate + reduced [NADPH--hemoprotein reductase] + O2 = (11R,12S)-epoxy-(5Z,8Z,14Z)-eicosatrienoate + oxidized [NADPH--hemoprotein reductase] + H2O + H(+). The catalysed reaction is (5Z,8Z,11Z,14Z)-eicosatetraenoate + reduced [NADPH--hemoprotein reductase] + O2 = (14S,15R)-epoxy-(5Z,8Z,11Z)-eicosatrienoate + oxidized [NADPH--hemoprotein reductase] + H2O + H(+). It carries out the reaction (5Z,8Z,11Z,14Z)-eicosatetraenoate + reduced [NADPH--hemoprotein reductase] + O2 = (14R,15S)-epoxy-(5Z,8Z,11Z)-eicosatrienoate + oxidized [NADPH--hemoprotein reductase] + H2O + H(+). It catalyses the reaction (5Z,8Z,11Z,14Z,17Z)-eicosapentaenoate + reduced [NADPH--hemoprotein reductase] + O2 = (17R,18S)-epoxy-(5Z,8Z,11Z,14Z)-eicosatetraenoate + oxidized [NADPH--hemoprotein reductase] + H2O + H(+). The enzyme catalyses (4Z,7Z,10Z,13Z,16Z,19Z)-docosahexaenoate + reduced [NADPH--hemoprotein reductase] + O2 = (19S,20R)-epoxy-(4Z,7Z,10Z,13Z,16Z)-docosapentaenoate + oxidized [NADPH--hemoprotein reductase] + H2O + H(+). The catalysed reaction is (4Z,7Z,10Z,13Z,16Z,19Z)-docosahexaenoate + reduced [NADPH--hemoprotein reductase] + O2 = (19R,20S)-epoxy-(4Z,7Z,10Z,13Z,16Z)-docosapentaenoate + oxidized [NADPH--hemoprotein reductase] + H2O + H(+). It carries out the reaction all-trans-retinol + reduced [NADPH--hemoprotein reductase] + O2 = all-trans-retinal + oxidized [NADPH--hemoprotein reductase] + 2 H2O + H(+). It catalyses the reaction all-trans-retinal + reduced [NADPH--hemoprotein reductase] + O2 = all-trans-retinoate + oxidized [NADPH--hemoprotein reductase] + H2O + 2 H(+). The enzyme catalyses (13S)-hydroperoxy-(9Z,11E)-octadecadienoate = 13-oxo-(9Z,11E)-octadecadienoate + H2O. The catalysed reaction is (12S)-hydroperoxy-(5Z,8Z,10E,14Z)-eicosatetraenoate = 12-oxo-(5Z,8Z,10E,14Z)-eicosatetraenoate + H2O. It carries out the reaction (15S)-hydroperoxy-(5Z,8Z,11Z,13E)-eicosatetraenoate = 15-oxo-(5Z,8Z,11Z,13E)-eicosatetraenoate + H2O. It catalyses the reaction (5S)-hydroperoxy-(6E,8Z,11Z,14Z)-eicosatetraenoate = 5-oxo-(6E,8Z,11Z,14Z)-eicosatetraenoate + H2O. Its pathway is steroid hormone biosynthesis. It functions in the pathway lipid metabolism; fatty acid metabolism. It participates in cofactor metabolism; retinol metabolism. Its function is as follows. A cytochrome P450 monooxygenase involved in the metabolism of various endogenous substrates, including fatty acids, steroid hormones and vitamins. Mechanistically, uses molecular oxygen inserting one oxygen atom into a substrate, and reducing the second into a water molecule, with two electrons provided by NADPH via cytochrome P450 reductase (NADPH--hemoprotein reductase). Catalyzes the hydroxylation of carbon-hydrogen bonds. Exhibits high catalytic activity for the formation of hydroxyestrogens from estrone (E1) and 17beta-estradiol (E2), namely 2-hydroxy E1 and E2, as well as D-ring hydroxylated E1 and E2 at the C15-alpha and C16-alpha positions. Displays different regioselectivities for polyunsaturated fatty acids (PUFA) hydroxylation. Catalyzes the epoxidation of double bonds of certain PUFA. Converts arachidonic acid toward epoxyeicosatrienoic acid (EET) regioisomers, 8,9-, 11,12-, and 14,15-EET, that function as lipid mediators in the vascular system. Displays an absolute stereoselectivity in the epoxidation of eicosapentaenoic acid (EPA) producing the 17(R),18(S) enantiomer. May play an important role in all-trans retinoic acid biosynthesis in extrahepatic tissues. Catalyzes two successive oxidative transformation of all-trans retinol to all-trans retinal and then to the active form all-trans retinoic acid. May also participate in eicosanoids metabolism by converting hydroperoxide species into oxo metabolites (lipoxygenase-like reaction, NADPH-independent). This is Cytochrome P450 1A1 from Homo sapiens (Human).